The primary structure comprises 397 residues: Argininosuccinate synthase (397 aa).

An ATP-binding site is contributed by 9-17; sequence AYSGGLDTS. Tyr-85 serves as a coordination point for L-citrulline. Gly-115 is an ATP binding site. L-aspartate is bound by residues Thr-117, Asn-121, and Asp-122. Asn-121 serves as a coordination point for L-citrulline. Residues Arg-125, Ser-173, Glu-258, and Tyr-270 each contribute to the L-citrulline site.

Belongs to the argininosuccinate synthase family. Type 1 subfamily. Homotetramer.

The protein localises to the cytoplasm. The enzyme catalyses L-citrulline + L-aspartate + ATP = 2-(N(omega)-L-arginino)succinate + AMP + diphosphate + H(+). It functions in the pathway amino-acid biosynthesis; L-arginine biosynthesis; L-arginine from L-ornithine and carbamoyl phosphate: step 2/3. The sequence is that of Argininosuccinate synthase from Streptococcus suis (strain 05ZYH33).